The sequence spans 481 residues: MLNEGIINKIYDSVVEVLGLKNAKYGEMILFSKNIKGIVFSLNKKNVNIIILNNYNELTQGEKCYCTNKIFEVPVGKQLIGRIINSRGETLDLLPEIKINEFSPIEKIAPGVMDRETVNEPLLTGIKSIDSMIPIGKGQRELIIGDRQTGKTTICIDTIINQKNKNIICVYVCIGQKISSLINIINKLKKFNCLEYTIIVASTASDSAAEQYIAPYTGSTISEYFRDKGQDCLIVYDDLTKHAWAYRQISLLLRRPPGREAYPGDVFYLHSRLLERSSKVNKFFVNKKSNILKAGSLTAFPIIETLEGDVTSFIPTNVISITDGQIFLDTNLFNSGIRPSINVGLSVSRVGGAAQYKIIKKLSGDIRIMLAQYRELEAFSKFSSDLDSETKNQLIIGEKITILMKQNIHDVYDIFELILILLIIKHDFFRLIPINQVEYFENKIINYLRKIKFKNQIEIDNKNLENCLNELISFFISNSIL.

An ATP-binding site is contributed by 145-152 (GDRQTGKT).

Belongs to the ATPase alpha/beta chains family. F-type ATPases have 2 components, CF(1) - the catalytic core - and CF(0) - the membrane proton channel. CF(1) has five subunits: alpha(3), beta(3), gamma(1), delta(1), epsilon(1). CF(0) has three main subunits: a(1), b(2) and c(9-12). The alpha and beta chains form an alternating ring which encloses part of the gamma chain. CF(1) is attached to CF(0) by a central stalk formed by the gamma and epsilon chains, while a peripheral stalk is formed by the delta and b chains.

It is found in the cell membrane. The catalysed reaction is ATP + H2O + 4 H(+)(in) = ADP + phosphate + 5 H(+)(out). Its function is as follows. Produces ATP from ADP in the presence of a proton gradient across the membrane. The alpha chain is a regulatory subunit. The polypeptide is ATP synthase subunit alpha (Carsonella ruddii (strain PV)).